Here is a 274-residue protein sequence, read N- to C-terminus: tRNA-cytidine(32) 2-sulfurtransferase (274 aa).

The PP-loop motif signature appears at 40–45 (SGGKDS). The [4Fe-4S] cluster site is built by C115, C118, and C206.

Belongs to the TtcA family. Homodimer. Mg(2+) serves as cofactor. It depends on [4Fe-4S] cluster as a cofactor.

Its subcellular location is the cytoplasm. It carries out the reaction cytidine(32) in tRNA + S-sulfanyl-L-cysteinyl-[cysteine desulfurase] + AH2 + ATP = 2-thiocytidine(32) in tRNA + L-cysteinyl-[cysteine desulfurase] + A + AMP + diphosphate + H(+). Its pathway is tRNA modification. Its function is as follows. Catalyzes the ATP-dependent 2-thiolation of cytidine in position 32 of tRNA, to form 2-thiocytidine (s(2)C32). The sulfur atoms are provided by the cysteine/cysteine desulfurase (IscS) system. In Azotobacter vinelandii (strain DJ / ATCC BAA-1303), this protein is tRNA-cytidine(32) 2-sulfurtransferase.